The following is an 861-amino-acid chain: Actin-binding LIM protein 1 (861 aa).

4 consecutive LIM zinc-binding domains span residues 97–156 (IHCH…MYGT), 156–216 (TRCH…MSSS), 224–283 (SNCA…LFGV), and 283–343 (VKCE…TKTE). Position 216 is a phosphoserine (Ser-216). Residues 374–414 (LQLLSPPCLTNSNKNPRQPTRTSSESIYSRPGSSIPGSPGH) are disordered. Residues 381–400 (CLTNSNKNPRQPTRTSSESI) show a composition bias toward polar residues. The segment covering 404–413 (PGSSIPGSPG) has biased composition (low complexity). At Ser-411 the chain carries Phosphoserine. Phosphotyrosine occurs at positions 417 and 440. Disordered regions lie at residues 459-590 (EDKQ…PTYA) and 634-682 (FPAA…ELLR). Ser-466, Ser-470, and Ser-475 each carry phosphoserine. Over residues 467 to 478 (LGESPRTLSPTP) the composition is skewed to polar residues. Thr-477 is modified (phosphothreonine). Position 479 is a phosphoserine (Ser-479). At Tyr-483 the chain carries Phosphotyrosine. Over residues 493-518 (RSTSQGSINSPVYSRHSYTPTTSRSP) the composition is skewed to polar residues. A phosphoserine mark is found at Ser-496, Ser-499, and Ser-502. The segment covering 536–546 (PLRTSSFSSTH) has biased composition (low complexity). Residues Ser-582 and Ser-671 each carry the phosphoserine modification. Positions 673-723 (REEDEEELLRRRQLQEEQLMKLNSGLGQLILKEEMEKESRERASLASRYDS) form a coiled coil. A Glycyl lysine isopeptide (Lys-Gly) (interchain with G-Cter in SUMO2) cross-link involves residue Lys-704. Residues 713 to 748 (ERASLASRYDSPLHSASHAPSSKTSSLPGYGKNGLH) form a disordered region. A phosphoserine mark is found at Ser-723, Ser-738, Ser-760, and Ser-789. The span at 724–738 (PLHSASHAPSSKTSS) shows a compositional bias: low complexity. Residues 793-861 (MLEPKIFPYE…NDMKKKAKLF (69 aa)) form the HP domain.

In terms of assembly, binds F-actin. Interacts with ABRA. As to expression, isoform 1 is detected in adult retina, where it is highly expressed in the ganglion layer. Detected in rod inner segment. Isoform 2 is highly expressed in adult retina, brain, kidney and heart. Isoform 3 is highly expressed in adult retina, brain, kidney, liver, skeletal muscle, spleen and heart. Detected in embryonic retina, brain, spinal cord, peripheral sensory ganglia and thymus.

The protein localises to the cytoplasm. The protein resides in the cytoskeleton. Its function is as follows. May act as scaffold protein. May play a role in the development of the retina. Has been suggested to play a role in axon guidance. In Mus musculus (Mouse), this protein is Actin-binding LIM protein 1 (Ablim1).